The sequence spans 651 residues: ATP synthase F(1) complex catalytic subunit beta, mitochondrial (651 aa).

The transit peptide at 1 to 30 directs the protein to the mitochondrion; sequence MFVARRLSKNITQISKTAVKTSVRAVPVRG. Positions 259, 260, 261, 262, 263, and 264 each coordinate ADP. Glycine 259 contacts ATP. 5 residues coordinate phosphate: glycine 259, valine 260, glycine 261, lysine 262, and threonine 263. 4 residues coordinate ATP: glycine 261, lysine 262, threonine 263, and valine 264. Threonine 263 provides a ligand contact to Mg(2+). Glutamate 288 serves as a coordination point for Mg(2+). Arginine 289 lines the ATP pocket.

Belongs to the ATPase alpha/beta chains family. As to quaternary structure, homotrimer. Component of the ATP synthase complex composed at least of ATP5F1A/subunit alpha, ATP5F1B/subunit beta, ATP5MC1/subunit c (homooctomer), MT-ATP6/subunit a, MT-ATP8/subunit 8, ATP5ME/subunit e, ATP5MF/subunit f, ATP5MG/subunit g, ATP5MK/subunit k, ATP5MJ/subunit j, ATP5F1C/subunit gamma, ATP5F1D/subunit delta, ATP5F1E/subunit epsilon, ATP5PF/subunit F6, ATP5PB/subunit b, ATP5PD/subunit d, ATP5PO/subunit OSCP. ATP synthase complex consists of a soluble F(1) head domain (subunits alpha(3) and beta(3)) - the catalytic core - and a membrane F(0) domain - the membrane proton channel (subunits c, a, 8, e, f, g, k and j). These two domains are linked by a central stalk (subunits gamma, delta, and epsilon) rotating inside the F1 region and a stationary peripheral stalk (subunits F6, b, d, and OSCP).

It is found in the mitochondrion inner membrane. The enzyme catalyses ATP + H2O + 4 H(+)(in) = ADP + phosphate + 5 H(+)(out). Its function is as follows. Catalytic subunit beta, of the mitochondrial membrane ATP synthase complex (F(1)F(0) ATP synthase or Complex V) that produces ATP from ADP in the presence of a proton gradient across the membrane which is generated by electron transport complexes of the respiratory chain. ATP synthase complex consist of a soluble F(1) head domain - the catalytic core - and a membrane F(1) domain - the membrane proton channel. These two domains are linked by a central stalk rotating inside the F(1) region and a stationary peripheral stalk. During catalysis, ATP synthesis in the catalytic domain of F(1) is coupled via a rotary mechanism of the central stalk subunits to proton translocation. In vivo, can only synthesize ATP although its ATP hydrolase activity can be activated artificially in vitro. With the subunit alpha (ATP5F1A), forms the catalytic core in the F(1) domain. This Dictyostelium discoideum (Social amoeba) protein is ATP synthase F(1) complex catalytic subunit beta, mitochondrial.